Reading from the N-terminus, the 959-residue chain is DNA polymerase 1 (959 aa).

The disordered stretch occupies residues 1 to 110; that stretch reads MRVRGGQEAA…LTLEPSPQSE (110 aa). Over residues 44–60 the composition is skewed to basic and acidic residues; the sequence is KKPEPPPTLHREREPES.

The protein belongs to the DNA polymerase type-B family.

It catalyses the reaction DNA(n) + a 2'-deoxyribonucleoside 5'-triphosphate = DNA(n+1) + diphosphate. The protein is DNA polymerase 1 (polA) of Aeropyrum pernix (strain ATCC 700893 / DSM 11879 / JCM 9820 / NBRC 100138 / K1).